The primary structure comprises 456 residues: Gamma-glutamyl phosphate reductase (456 aa).

The protein belongs to the gamma-glutamyl phosphate reductase family.

It is found in the cytoplasm. The enzyme catalyses L-glutamate 5-semialdehyde + phosphate + NADP(+) = L-glutamyl 5-phosphate + NADPH + H(+). Its pathway is amino-acid biosynthesis; L-proline biosynthesis; L-glutamate 5-semialdehyde from L-glutamate: step 2/2. In terms of biological role, catalyzes the NADPH-dependent reduction of L-glutamate 5-phosphate into L-glutamate 5-semialdehyde and phosphate. The product spontaneously undergoes cyclization to form 1-pyrroline-5-carboxylate. This is Gamma-glutamyl phosphate reductase from Haloquadratum walsbyi (strain DSM 16790 / HBSQ001).